A 383-amino-acid polypeptide reads, in one-letter code: Smad nuclear-interacting protein 1 (383 aa).

Residues 1-10 (MKAGKSERER) are compositionally biased toward basic and acidic residues. Residues 1–209 (MKAGKSERER…NRSKEVPVKE (209 aa)) form a disordered region. Position 18 is a phosphoserine (S18). K28 is covalently cross-linked (Glycyl lysine isopeptide (Lys-Gly) (interchain with G-Cter in SUMO); alternate). K28 is covalently cross-linked (Glycyl lysine isopeptide (Lys-Gly) (interchain with G-Cter in SUMO1); alternate). K28 is covalently cross-linked (Glycyl lysine isopeptide (Lys-Gly) (interchain with G-Cter in SUMO2); alternate). Over residues 28-43 (KQERLSPEPVAHRRPD) the composition is skewed to basic and acidic residues. 3 positions are modified to phosphoserine: S33, S48, and S50. A compositionally biased stretch (low complexity) spans 44–56 (APAASLSPPAAEP). A compositionally biased stretch (basic residues) spans 59–90 (SGHRGSRARSPAKKKSKSSGRRSKSPRTKRSQ). S91 carries the phosphoserine modification. Composition is skewed to basic and acidic residues over residues 99–134 (VKQE…ERDR) and 143–159 (RSSD…DRDS). Residue K100 forms a Glycyl lysine isopeptide (Lys-Gly) (interchain with G-Cter in SUMO2) linkage. S145 carries the phosphoserine modification. Residues 153–194 (QDRDRDSQNLQAQEEERDFHNARRREHRQQNESAGSEAQEVI) adopt a coiled-coil conformation. K210 is covalently cross-linked (Glycyl lysine isopeptide (Lys-Gly) (interchain with G-Cter in SUMO2)). The FHA domain occupies 268 to 331 (YLLGRHRRIA…NGTFLNNKRI (64 aa)). Over residues 359-369 (ESSDTSELDRK) the composition is skewed to basic and acidic residues. The interval 359 to 383 (ESSDTSELDRKEDEDDEEEEMVSDS) is disordered. A compositionally biased stretch (acidic residues) spans 370 to 383 (EDEDDEEEEMVSDS). S381 bears the Phosphoserine mark.

Component of activated spliceosome complexes. Binds SMAD4 and CREBBP/EP300. Component of the minor spliceosome, which splices U12-type introns. Binds the SMAD1/OAZ1/PSMB4 complex. Interacts with DROSHA and SMARCA4. Component of the SNARP complex which consists at least of SNIP1, SNW1, THRAP3, BCLAF1 and PNN. In terms of processing, degraded by the proteasome upon binding to the SMAD1/OAZ1/PSMB4 complex.

Its subcellular location is the nucleus. Functionally, required for pre-mRNA splicing as component of the spliceosome. As a component of the minor spliceosome, involved in the splicing of U12-type introns in pre-mRNAs. Down-regulates NF-kappa-B signaling by competing with RELA for CREBBP/EP300 binding. Involved in the microRNA (miRNA) biogenesis. May be involved in cyclin-D1/CCND1 mRNA stability through the SNARP complex which associates with both the 3'end of the CCND1 gene and its mRNA. The protein is Smad nuclear-interacting protein 1 (Snip1) of Mus musculus (Mouse).